A 657-amino-acid chain; its full sequence is N-acetylgalactosaminyltransferase 7 (657 aa).

Over 1–6 (MRLKIG) the chain is Cytoplasmic. A helical; Signal-anchor for type II membrane protein transmembrane segment spans residues 7-29 (FILRSLLVVGSFLGLVVLWSSLS). The tract at residues 30–66 (SRPDDPSPLSRMREDRDVNNPLPNRGGNGLAPGDDRF) is disordered. At 30-657 (SRPDDPSPLS…KWEMNNIHSV (628 aa)) the chain is on the lumenal side. Intrachain disulfides connect Cys197-Cys435, Cys426-Cys507, Cys545-Cys562, Cys585-Cys600, and Cys625-Cys640. Positions 206–317 (LLTSSVVIVF…VNWYAPLVAP (112 aa)) are catalytic subdomain A. The substrate site is built by Asp247 and Arg277. Mn(2+)-binding residues include Asp301 and His303. The tract at residues 381 to 443 (PYRSPAMAGG…PCSRVGHIYR (63 aa)) is catalytic subdomain B. A substrate-binding site is contributed by Trp412. His440 provides a ligand contact to Mn(2+). A substrate-binding site is contributed by Arg443. A Ricin B-type lectin domain is found at 532-652 (VEWGEIRGLE…GKMTQKWEMN (121 aa)).

This sequence belongs to the glycosyltransferase 2 family. GalNAc-T subfamily. It depends on Mn(2+) as a cofactor. Highly expressed in sublingual gland. Expressed at lower level in stomach, small intestiine and colon.

It localises to the golgi apparatus membrane. The enzyme catalyses L-seryl-[protein] + UDP-N-acetyl-alpha-D-galactosamine = a 3-O-[N-acetyl-alpha-D-galactosaminyl]-L-seryl-[protein] + UDP + H(+). The catalysed reaction is L-threonyl-[protein] + UDP-N-acetyl-alpha-D-galactosamine = a 3-O-[N-acetyl-alpha-D-galactosaminyl]-L-threonyl-[protein] + UDP + H(+). Its pathway is protein modification; protein glycosylation. Its function is as follows. Glycopeptide transferase involved in O-linked oligosaccharide biosynthesis, which catalyzes the transfer of an N-acetyl-D-galactosamine residue to an already glycosylated peptide. In contrast to other proteins of the family, it does not act as a peptide transferase that transfers GalNAc onto serine or threonine residue on the protein receptor, but instead requires the prior addition of a GalNAc on a peptide before adding additional GalNAc moieties. Some peptide transferase activity is however not excluded, considering that its appropriate peptide substrate may remain unidentified. This is N-acetylgalactosaminyltransferase 7 (Galnt7) from Rattus norvegicus (Rat).